A 90-amino-acid chain; its full sequence is Secretoglobin family 1D member 1 (90 aa).

The signal sequence occupies residues 1-21 (MRLSVCLLLLTLALCCYRANA).

Heterodimer of a lipophilin A and a lipophilin C (mammaglobin B) monomer associated head to head. In terms of tissue distribution, expressed in lachrymal gland, thymus, kidney, testis, ovary and salivary gland.

It localises to the secreted. Its function is as follows. May bind androgens and other steroids, may also bind estramustine, a chemotherapeutic agent used for prostate cancer. May be under transcriptional regulation of steroid hormones. This Homo sapiens (Human) protein is Secretoglobin family 1D member 1 (SCGB1D1).